The following is a 166-amino-acid chain: Protein FAM89A (166 aa).

This sequence belongs to the FAM89 family.

This Xenopus laevis (African clawed frog) protein is Protein FAM89A (fam89a).